A 41-amino-acid chain; its full sequence is Disintegrin obtustatin (41 aa).

Intrachain disulfides connect Cys-1/Cys-10, Cys-6/Cys-29, Cys-7/Cys-34, and Cys-19/Cys-36. The 41-residue stretch at 1–41 (CTTGPCCRQCKLKPAGTTCWKTSLTSHYCTGKSCDCPLYPG) folds into the Disintegrin domain. A Cell attachment site; atypical (KTS) motif is present at residues 21–23 (KTS).

Belongs to the disintegrin family. Short disintegrin subfamily. Monomer. As to expression, expressed by the venom gland.

The protein resides in the secreted. Is a potent and selective inhibitor of alpha-1/beta-1 (ITGA1/ITGB1) integrin. It blocks the adhesion of alpha-1/beta-1-expressing K562 cells to immobilized collagens IV and I with IC(50) of 2 and 0.5 nM, respectively. Potently inhibits angiogenesis in chicken and in mouse model and reduces tumor development by half. Is 25-fold less potent than viperistatin. This Macrovipera lebetina obtusa (Levant blunt-nosed viper) protein is Disintegrin obtustatin.